A 1151-amino-acid polypeptide reads, in one-letter code: ATP-dependent helicase/deoxyribonuclease subunit B (1151 aa).

The 273-residue stretch at 1-273 folds into the UvrD-like helicase ATP-binding domain; the sequence is MALRLVLGRA…LALAAGVRVE (273 aa). 8 to 15 serves as a coordination point for ATP; the sequence is GRAGSGKT. Residues 282 to 578 enclose the UvrD-like helicase C-terminal domain; the sequence is PPRFREAPAL…KLRLIPPALD (297 aa). Residues Cys788, Cys1107, Cys1110, and Cys1116 each coordinate [4Fe-4S] cluster.

The protein belongs to the helicase family. AddB/RexB type 1 subfamily. In terms of assembly, heterodimer of AddA and AddB. Mg(2+) serves as cofactor. It depends on [4Fe-4S] cluster as a cofactor.

In terms of biological role, the heterodimer acts as both an ATP-dependent DNA helicase and an ATP-dependent, dual-direction single-stranded exonuclease. Recognizes the chi site generating a DNA molecule suitable for the initiation of homologous recombination. The AddB subunit has 5' -&gt; 3' nuclease activity but not helicase activity. The sequence is that of ATP-dependent helicase/deoxyribonuclease subunit B from Moorella thermoacetica (strain ATCC 39073 / JCM 9320).